The primary structure comprises 496 residues: probable leucine aminopeptidase 2 (496 aa).

Residues 1-16 (MRSLLWASLLSGVLAG) form the signal peptide. A PA domain is found at 111 to 205 (PSVEVTADVA…SLEDGQKLIK (95 aa)). N-linked (GlcNAc...) asparagine glycosylation is present at Asn224. Zn(2+)-binding residues include His248 and Asp260. Residue Glu292 is the Proton acceptor of the active site. Glu293 provides a ligand contact to Zn(2+). A glycan (N-linked (GlcNAc...) asparagine) is linked at Asn307. Asp321 is a binding site for Zn(2+). Asn341 and Asn402 each carry an N-linked (GlcNAc...) asparagine glycan. Zn(2+) is bound at residue His419. Asn424 and Asn458 each carry an N-linked (GlcNAc...) asparagine glycan. The disordered stretch occupies residues 475–496 (KRAPKTHAHVSGSGCWHSQVEA).

It belongs to the peptidase M28 family. M28A subfamily. As to quaternary structure, monomer. Requires Zn(2+) as cofactor.

It is found in the secreted. In terms of biological role, extracellular aminopeptidase that releases a wide variety of amino acids from natural peptides. The sequence is that of probable leucine aminopeptidase 2 (lap2) from Aspergillus oryzae (strain ATCC 42149 / RIB 40) (Yellow koji mold).